Consider the following 1396-residue polypeptide: Melanoma inhibitory activity protein 2 (1396 aa).

The first 22 residues, 1 to 22, serve as a signal peptide directing secretion; that stretch reads MAEVSVQRILLLVVSLAKCLEG. At 23–604 the chain is on the lumenal side; it reads TKLLAHLKKC…YGFMSSALSP (582 aa). The SH3 domain maps to 39-101; sequence TLISRVLALR…PRDAVEIEEV (63 aa). A glycan (N-linked (GlcNAc...) asparagine) is linked at N59. Disordered regions lie at residues 197–288 and 331–361; these read EGAG…VPDE and ESNPPLQDIPSSVPPDEEVPAPCREISTDKE. Acidic residues predominate over residues 243–258; the sequence is SDTEPTQELALEEESD. An N-linked (GlcNAc...) asparagine glycan is attached at N366. Disordered regions lie at residues 396 to 421 and 525 to 557; these read DKGENEDGEVDNLKHPIGSDFDPEKE and PMEEHEGVHFKPSSSKRNEDDSNSWADPEELSV. Residues 605-625 lie within the membrane without spanning it; the sequence is IEILLESVVAALPEDMRADFN. At 626–628 the chain is on the lumenal side; the sequence is PSG. The chain crosses the membrane as a helical span at residues 629 to 649; the sequence is FSLELAVCVLSVGLLAVVLFL. At 650–1396 the chain is on the cytoplasmic side; the sequence is WRGFRSIRSR…AADPPETQEA (747 aa). Residues 651–1243 are mediates interaction with MIA3; it reads RGFRSIRSRF…RSYNMPSLDK (593 aa). Coiled-coil stretches lie at residues 693–867 and 914–1082; these read YEGL…LVTS and AAKL…NRQK. Positions 1103–1396 are disordered; that stretch reads PNTAFGREHS…AADPPETQEA (294 aa). Residues 1105–1396 form a proline-rich domain (PRD); probably mediates interaction with COPII coat subunits region; the sequence is TAFGREHSPY…AADPPETQEA (292 aa). A compositionally biased stretch (low complexity) spans 1135-1146; the sequence is LLEGPLRLSPLL. Over residues 1165-1179 the composition is skewed to basic and acidic residues; it reads MNTERGESSYDRLSD. Residues 1252–1269 show a composition bias toward polar residues; it reads MESSGNGTKDNLGNSNVP. Pro residues-rich tracts occupy residues 1331–1342 and 1351–1368; these read RDFPGPPLPPFP and GFPPYLPPRAGFFPPPPH.

This sequence belongs to the MIA/OTOR family. As to quaternary structure, interacts with MIA3. Interacts with the COPII coat subunits SEC23A, SEC23B and maybe SEC24C. Interacts with PREB; recruits PREB to endoplasmic reticulum exit sites. Interacts with APOB. In terms of tissue distribution, isoform 1 is expressed in liver (at protein level). Isoform 2 is highly expressed in liver and weakly in testis.

It localises to the endoplasmic reticulum membrane. Functionally, plays a role in the transport of cargos that are too large to fit into COPII-coated vesicles and require specific mechanisms to be incorporated into membrane-bound carriers and exported from the endoplasmic reticulum. Plays a role in the secretion of lipoproteins, pre-chylomicrons and pre-VLDLs, by participating in their export from the endoplasmic reticulum. Thereby, may play a role in cholesterol and triglyceride homeostasis. Required for collagen VII (COL7A1) secretion by loading COL7A1 into transport carriers and recruiting PREB/SEC12 at the endoplasmic reticulum exit sites. This chain is Melanoma inhibitory activity protein 2, found in Mus musculus (Mouse).